The sequence spans 321 residues: Thymidylate synthase (321 aa).

The disordered stretch occupies residues 1–32; it reads MVLTPTKDGPDQESMPLPADNGESPSKQQAPV. A phosphoserine mark is found at Ser24 and Ser26. Tyr39 is modified (phosphotyrosine). DUMP-binding positions include Arg56 and 181 to 182; that span reads RR. The active-site Nucleophile is the Cys201. A Phosphotyrosine modification is found at Tyr208. Residue Ser210 is modified to Phosphoserine. DUMP-binding positions include 223–226, Asn234, and 264–266; these read RSAD and HVY. Asp226 is a (6R)-5,10-methylene-5,6,7,8-tetrahydrofolate binding site. Ala320 contacts (6R)-5,10-methylene-5,6,7,8-tetrahydrofolate.

The protein belongs to the thymidylate synthase family. As to quaternary structure, homodimer.

The enzyme catalyses dUMP + (6R)-5,10-methylene-5,6,7,8-tetrahydrofolate = 7,8-dihydrofolate + dTMP. The protein operates within pyrimidine metabolism; dTTP biosynthesis. The protein is Thymidylate synthase (Ts) of Drosophila melanogaster (Fruit fly).